A 187-amino-acid polypeptide reads, in one-letter code: UPF0301 protein Spro_4027 (187 aa).

This sequence belongs to the UPF0301 (AlgH) family.

The chain is UPF0301 protein Spro_4027 from Serratia proteamaculans (strain 568).